We begin with the raw amino-acid sequence, 236 residues long: Cysteine-rich venom protein TRI1 (236 aa).

Positions 1–18 (MIVFILLSLAAVLEQSFG) are cleaved as a signal peptide. In terms of domain architecture, SCP spans 37 to 165 (VDRHNSFRRS…GYSYFYVCQY (129 aa)). 8 disulfide bridges follow: Cys74–Cys152, Cys91–Cys166, Cys147–Cys163, Cys185–Cys192, Cys188–Cys197, Cys201–Cys234, Cys210–Cys228, and Cys219–Cys232. In terms of domain architecture, ShKT spans 201–234 (CLREDKFTNCKSLVQQNSCQHDWTRKNCPATCFC).

Belongs to the CRISP family. Expressed by the venom gland.

The protein resides in the secreted. Functionally, blocks contraction of smooth muscle elicited by high potassium-induced depolarization, but does not block caffeine-stimulated contraction. May target voltage-gated calcium channels on smooth muscle. In Trimorphodon biscutatus (Western lyre snake), this protein is Cysteine-rich venom protein TRI1.